Consider the following 309-residue polypeptide: Olfactory receptor 1A1 (309 aa).

Over 1–25 (MRENNQSSTLEFILLGVTGQQEQED) the chain is Extracellular. Asparagine 5 is a glycosylation site (N-linked (GlcNAc...) asparagine). A helical membrane pass occupies residues 26 to 49 (FFYILFLFIYPITLIGNLLIVLAI). The Cytoplasmic segment spans residues 50–57 (CSDVHLHN). The chain crosses the membrane as a helical span at residues 58–79 (PMYFLLANLSLVDIFFSSVTIP). At 80-100 (KMLANHLSGSKSISFGGCLTQ) the chain is on the extracellular side. Cysteine 97 and cysteine 189 are oxidised to a cystine. The helical transmembrane segment at 101 to 120 (MYFMIDLGNTDSYTLAAMAY) threads the bilayer. The Cytoplasmic segment spans residues 121-139 (DRAVAISRPLHYTTIMSPR). A helical transmembrane segment spans residues 140–158 (SCIWLIAGSWVIGNANALP). Residues 159–195 (HTLLTASLSFCGNQEVANFYCDITPLLKLSCSDIHFH) lie on the Extracellular side of the membrane. The chain crosses the membrane as a helical span at residues 196–218 (VKMMYLGVGIFSVPLLCIIVSYI). Residues 219–235 (RVFSTVFQVPSTKGVLK) lie on the Cytoplasmic side of the membrane. Residues 236–258 (AFSTCGSHLTVVSLYYGTVMGMY) form a helical membrane-spanning segment. The Extracellular portion of the chain corresponds to 259 to 270 (FRPLTNYSLKDA). The N-linked (GlcNAc...) asparagine glycan is linked to asparagine 264. The chain crosses the membrane as a helical span at residues 271 to 290 (VITVMCTAVTPMLNPFIYSL). The Cytoplasmic portion of the chain corresponds to 291–309 (RNRDMKAALQKLFNKRISS).

The protein belongs to the G-protein coupled receptor 1 family.

It localises to the cell membrane. Functionally, odorant receptor. In Gorilla gorilla gorilla (Western lowland gorilla), this protein is Olfactory receptor 1A1 (OR1A1).